Reading from the N-terminus, the 434-residue chain is Beta-enolase (434 aa).

At alanine 2 the chain carries N-acetylalanine. A Phosphothreonine modification is found at threonine 72. Serine 83 and serine 157 each carry phosphoserine. Substrate contacts are provided by histidine 158 and glutamate 167. Serine 176 carries the phosphoserine modification. Position 205 is a phosphothreonine (threonine 205). The active-site Proton donor is glutamate 210. The residue at position 229 (threonine 229) is a Phosphothreonine. Tyrosine 236 bears the Phosphotyrosine mark. Aspartate 245 is a binding site for Mg(2+). Serine 263 is subject to Phosphoserine. Positions 293 and 318 each coordinate substrate. 2 residues coordinate Mg(2+): glutamate 293 and aspartate 318. Lysine 343 functions as the Proton acceptor in the catalytic mechanism. Residues 370–373 and lysine 394 contribute to the substrate site; that span reads SHRS.

It belongs to the enolase family. In terms of assembly, mammalian enolase is composed of 3 isozyme subunits, alpha, beta and gamma, which can form homodimers or heterodimers which are cell-type and development-specific. Interacts with PNKD. Requires Mg(2+) as cofactor.

The protein localises to the cytoplasm. The catalysed reaction is (2R)-2-phosphoglycerate = phosphoenolpyruvate + H2O. Its pathway is carbohydrate degradation; glycolysis; pyruvate from D-glyceraldehyde 3-phosphate: step 4/5. Glycolytic enzyme that catalyzes the conversion of 2-phosphoglycerate to phosphoenolpyruvate. Appears to have a function in striated muscle development and regeneration. The chain is Beta-enolase (ENO3) from Sus scrofa (Pig).